The primary structure comprises 508 residues: Putative adenosylhomocysteinase 3 (508 aa).

Phosphoserine is present on S4. The segment at 24–81 is disordered; it reads DQKQEFNKRPTKIGRRSLSRSISQSSTDSYSSAASYTDSSDDETSPRDKQQKNSKGSS. Positions 32-41 are enriched in basic residues; it reads RPTKIGRRSL. The span at 42 to 61 shows a compositional bias: low complexity; it reads SRSISQSSTDSYSSAASYTD. 4 positions are modified to phosphoserine: S46, S49, S52, and S55. Residues T133, D207, and E232 each contribute to the substrate site. An NAD(+)-binding site is contributed by 233–235; the sequence is SVT. The substrate site is built by K262 and D266. NAD(+)-binding positions include N267, 298–303, E319, N354, 375–377, and N422; these read GEVGKG and IGH.

Belongs to the adenosylhomocysteinase family. In terms of assembly, homotetramer. Forms heteromultimers with AHCYL1 (via the C-terminal region). Interacts with ITPR1; with lower affinity than AHCYL1 and maybe via ITPR1. Interacts with SLC4A4. Interacts with ZCCHC4. NAD(+) serves as cofactor.

The protein localises to the cytoplasm. It is found in the microsome. The catalysed reaction is S-adenosyl-L-homocysteine + H2O = L-homocysteine + adenosine. Its pathway is amino-acid biosynthesis; L-homocysteine biosynthesis; L-homocysteine from S-adenosyl-L-homocysteine: step 1/1. Its function is as follows. May regulate the electrogenic sodium/bicarbonate cotransporter SLC4A4 activity and Mg(2+)-sensitivity. On the contrary of its homolog AHCYL1, does not regulate ITPR1 sensitivity to inositol 1,4,5-trisphosphate. This Pongo abelii (Sumatran orangutan) protein is Putative adenosylhomocysteinase 3 (AHCYL2).